The following is a 119-amino-acid chain: uncharacterized protein (119 aa).

The stretch at 1 to 29 (MKKVGEEEIKQEENEKEKIVKKLNESDVK) forms a coiled coil.

This is an uncharacterized protein from Acidianus sp. F28 (AFV-2).